Consider the following 387-residue polypeptide: V-set and immunoglobulin domain-containing protein 1 (387 aa).

The N-terminal stretch at 1-21 (MVFAFWKVFLILSCLAGQVSV) is a signal peptide. Residues 22–132 (VQVTIPDGFV…DFLGQNQGIL (111 aa)) form the Ig-like V-type domain. The Extracellular segment spans residues 22–232 (VQVTIPDGFV…EIDLTSSHPE (211 aa)). N-linked (GlcNAc...) asparagine glycans are attached at residues Asn32 and Asn38. A disulfide bond links Cys43 and Cys116. N-linked (GlcNAc...) asparagine glycosylation is found at Asn133, Asn200, and Asn219. The 88-residue stretch at 140–227 (PSKPLCSVQG…GNSSCEIDLT (88 aa)) folds into the Ig-like C2-type domain. A disulfide bridge links Cys161 with Cys211. A helical transmembrane segment spans residues 233-253 (VGIIVGALIGSLVGAAIIISV). The Cytoplasmic segment spans residues 254–387 (VCFARNKAKA…SEDEKGVVKA (134 aa)). Residues 266–387 (KERNSKTIAE…SEDEKGVVKA (122 aa)) are disordered. Over residues 284 to 296 (PRGESEAMPREDA) the composition is skewed to basic and acidic residues. Polar residues predominate over residues 299–308 (LEVTLPSSIH). Residues 325–335 (TQEPAPEPAPG) are compositionally biased toward pro residues. The span at 344 to 368 (LDIELELEPETQSELEPEPEPEPES) shows a compositional bias: acidic residues.

Post-translationally, highly N-glycosylated. Appears not to contain significant amounts of O-linked carbohydrates or sialic acid in its sugar moieties. In terms of tissue distribution, detected only in stomach mucosa and testis, and to a much lesser level in pancreas (at protein level). Detected in gastric cancers (31%), esophageal carcinomas (50%) and ovarian cancers (23%).

The protein resides in the membrane. The chain is V-set and immunoglobulin domain-containing protein 1 (VSIG1) from Homo sapiens (Human).